Reading from the N-terminus, the 980-residue chain is Valine--tRNA ligase (980 aa).

A 'HIGH' region motif is present at residues 43 to 53 (PNVTGTLHMGH). The 'KMSKS' region motif lies at 586 to 590 (KMSKS). Lys-589 is an ATP binding site. Residues 914–978 (LVDMDAERTR…QLTGLREQRA (65 aa)) are a coiled coil.

This sequence belongs to the class-I aminoacyl-tRNA synthetase family. ValS type 1 subfamily. As to quaternary structure, monomer.

Its subcellular location is the cytoplasm. The enzyme catalyses tRNA(Val) + L-valine + ATP = L-valyl-tRNA(Val) + AMP + diphosphate. Functionally, catalyzes the attachment of valine to tRNA(Val). As ValRS can inadvertently accommodate and process structurally similar amino acids such as threonine, to avoid such errors, it has a 'posttransfer' editing activity that hydrolyzes mischarged Thr-tRNA(Val) in a tRNA-dependent manner. In Xanthomonas euvesicatoria pv. vesicatoria (strain 85-10) (Xanthomonas campestris pv. vesicatoria), this protein is Valine--tRNA ligase.